The following is a 344-amino-acid chain: MSTSLSYRDAGVDIDAGDQLVENIKPFAKRTMRPEVLGDLGGFGALVEIGKKYQNPVLVSGTDGVGTKLKLAFDWDKHDTVGIDLVAMSVNDILVQGAEPLFFLDYFACGKLDVPRATDVIKGIAQGCEESGCALIGGETAEMPGMYPVGEYDLAGFAVGVVEKENVITGRSIGVGDVVLGLASNGAHSNGYSLIRKIIERDNPDLDAEFDNGKTLREAVIAPTRLYVKPILAALEKFTIKGMAHITGGGITENVPRVLPENTVAQIDAKSWELPKLFQWLQKAGNVETQEMYRTFNCGIGMVVIVAAEDADAVQGLLGEQGETVYRLGLIRERQGDEHQTQVA.

Belongs to the AIR synthase family.

The protein localises to the cytoplasm. The enzyme catalyses 2-formamido-N(1)-(5-O-phospho-beta-D-ribosyl)acetamidine + ATP = 5-amino-1-(5-phospho-beta-D-ribosyl)imidazole + ADP + phosphate + H(+). The protein operates within purine metabolism; IMP biosynthesis via de novo pathway; 5-amino-1-(5-phospho-D-ribosyl)imidazole from N(2)-formyl-N(1)-(5-phospho-D-ribosyl)glycinamide: step 2/2. This Neisseria meningitidis serogroup B (strain ATCC BAA-335 / MC58) protein is Phosphoribosylformylglycinamidine cyclo-ligase.